We begin with the raw amino-acid sequence, 473 residues long: H(+)/Cl(-) exchange transporter ClcA (473 aa).

Topologically, residues 1 to 32 (MKTDTPSLETPQAARLRRRQLIRQLLERDKTP) are cytoplasmic. A helical transmembrane segment spans residues 33–69 (LAILFMAAVVGTLVGLAAVAFDKGVAWLQNQRMGALV). The Periplasmic segment spans residues 70–76 (HTADNYP). The helical transmembrane segment at 77–100 (LLLTVAFLCSAVLAMFGYFLVRKY) threads the bilayer. Residues 106-110 (GSGIP) carry the Selectivity filter part_1 motif. Position 107 (Ser-107) interacts with chloride. The segment at residues 109–116 (IPEIEGAL) is an intramembrane region (helical). Residues 117 to 123 (EDQRPVR) are Cytoplasmic-facing. Helical transmembrane passes span 124-141 (WWRVLPVKFFGGLGTLGG) and 148-166 (EGPTVQIGGNIGRMVLDIF). A Selectivity filter part_2 motif is present at residues 146–150 (GREGP). Residues 167–176 (RLKGDEARHT) are Cytoplasmic-facing. 2 consecutive intramembrane regions (helical) follow at residues 177-189 (LLATGAAAGLAAA) and 193-201 (PLAGILFII). The Cytoplasmic portion of the chain corresponds to 202–214 (EEMRPQFRYTLIS). A helical membrane pass occupies residues 215–232 (IKAVFIGVIMSTIMYRIF). Residues 233–252 (NHEVALIDVGKLSDAPLNTL) are Periplasmic-facing. A helical transmembrane segment spans residues 253-281 (WLYLILGIIFGIFGPIFNKWVLGMQDLLH). At 282–287 (RVHGGN) the chain is on the cytoplasmic side. A helical membrane pass occupies residues 288-309 (ITKWVLMGGAIGGLCGLLGFVA). The Periplasmic segment spans residues 310-329 (PATSGGGFNLIPIATAGNFS). A run of 2 helical transmembrane segments spans residues 330–349 (MGMLVFIFVARVITTLLCFS) and 355–376 (GIFAPMLALGTVLGTAFGMVAV). The short motif at 355-359 (GIFAP) is the Selectivity filter part_3 element. Positions 356 and 357 each coordinate chloride. Over 377–386 (ELFPQYHLEA) the chain is Periplasmic. An intramembrane region (helical) is located at residues 387 to 401 (GTFAIAGMGALLAAS). Residues 402-404 (IRA) constitute an intramembrane region (note=Loop between two helices). Positions 405 to 416 (PLTGIILVLEMT) form an intramembrane region, helical. An intramembrane region (note=Loop between two helices) is located at residues 417–421 (DNYQL). Residues 422–438 (ILPMIITGLGATLLAQF) form a helical membrane-spanning segment. Topologically, residues 439 to 473 (TGGKPLYSAILARTLAKQEAEQLARSKAASASENT) are cytoplasmic. Tyr-445 provides a ligand contact to chloride.

This sequence belongs to the chloride channel (TC 2.A.49) family. ClcA subfamily. As to quaternary structure, homodimer.

It localises to the cell inner membrane. It carries out the reaction 2 chloride(in) + H(+)(out) = 2 chloride(out) + H(+)(in). Functionally, proton-coupled chloride transporter. Functions as antiport system and exchanges two chloride ions for 1 proton. Probably acts as an electrical shunt for an outwardly-directed proton pump that is linked to amino acid decarboxylation, as part of the extreme acid resistance (XAR) response. The protein is H(+)/Cl(-) exchange transporter ClcA of Escherichia coli O139:H28 (strain E24377A / ETEC).